Consider the following 558-residue polypeptide: Proline--tRNA ligase (558 aa).

The protein belongs to the class-II aminoacyl-tRNA synthetase family. ProS type 1 subfamily. Homodimer.

Its subcellular location is the cytoplasm. It catalyses the reaction tRNA(Pro) + L-proline + ATP = L-prolyl-tRNA(Pro) + AMP + diphosphate. Catalyzes the attachment of proline to tRNA(Pro) in a two-step reaction: proline is first activated by ATP to form Pro-AMP and then transferred to the acceptor end of tRNA(Pro). As ProRS can inadvertently accommodate and process non-cognate amino acids such as alanine and cysteine, to avoid such errors it has two additional distinct editing activities against alanine. One activity is designated as 'pretransfer' editing and involves the tRNA(Pro)-independent hydrolysis of activated Ala-AMP. The other activity is designated 'posttransfer' editing and involves deacylation of mischarged Ala-tRNA(Pro). The misacylated Cys-tRNA(Pro) is not edited by ProRS. This is Proline--tRNA ligase from Coprothermobacter proteolyticus (strain ATCC 35245 / DSM 5265 / OCM 4 / BT).